The sequence spans 205 residues: Holliday junction branch migration complex subunit RuvA (205 aa).

Residues 1-64 are domain I; the sequence is MIGKLKGTID…EDQLKLFGFM (64 aa). The interval 65-143 is domain II; sequence SALEREWFNL…AFTGDAGSAI (79 aa). Residues 144–153 form a flexible linker region; that stretch reads GLKQELGEGV. The segment at 153–205 is domain III; sequence VASAPVSDAVSALTNLGYSRDQAANAIAAALKNGGEGADSAKLIRLGLKELSR.

Belongs to the RuvA family. In terms of assembly, homotetramer. Forms an RuvA(8)-RuvB(12)-Holliday junction (HJ) complex. HJ DNA is sandwiched between 2 RuvA tetramers; dsDNA enters through RuvA and exits via RuvB. An RuvB hexamer assembles on each DNA strand where it exits the tetramer. Each RuvB hexamer is contacted by two RuvA subunits (via domain III) on 2 adjacent RuvB subunits; this complex drives branch migration. In the full resolvosome a probable DNA-RuvA(4)-RuvB(12)-RuvC(2) complex forms which resolves the HJ.

It localises to the cytoplasm. In terms of biological role, the RuvA-RuvB-RuvC complex processes Holliday junction (HJ) DNA during genetic recombination and DNA repair, while the RuvA-RuvB complex plays an important role in the rescue of blocked DNA replication forks via replication fork reversal (RFR). RuvA specifically binds to HJ cruciform DNA, conferring on it an open structure. The RuvB hexamer acts as an ATP-dependent pump, pulling dsDNA into and through the RuvAB complex. HJ branch migration allows RuvC to scan DNA until it finds its consensus sequence, where it cleaves and resolves the cruciform DNA. This chain is Holliday junction branch migration complex subunit RuvA, found in Allorhizobium ampelinum (strain ATCC BAA-846 / DSM 112012 / S4) (Agrobacterium vitis (strain S4)).